The primary structure comprises 419 residues: Transcription termination factor Rho (419 aa).

The region spanning 48–123 (DIFGDGVLEI…LKVNEVNYDK (76 aa)) is the Rho RNA-BD domain. RNA-binding stretches follow at residues 61 to 66 (GFGFLR), 78 to 80 (DIY), and 108 to 110 (ERY). ATP is bound by residues 169–174 (GRGQRG), 181–186 (KAGKTM), and Arg-212. The RNA-binding 2 stretch occupies residues 284–288 (VLTGG).

Belongs to the Rho family. As to quaternary structure, homohexamer. The homohexamer assembles into an open ring structure.

In terms of biological role, facilitates transcription termination by a mechanism that involves Rho binding to the nascent RNA, activation of Rho's RNA-dependent ATPase activity, and release of the mRNA from the DNA template. This Salmonella typhi protein is Transcription termination factor Rho.